A 487-amino-acid chain; its full sequence is Spermatogenesis-associated protein 6 (487 aa).

The first 17 residues, 1-17, serve as a signal peptide directing secretion; that stretch reads MPKVKALQCALALEIRS. A disordered region spans residues 170 to 221; it reads APVEKPHSRLQNRTSRSQKKKSKSPERNKYCINAKNYEQPTTSKSHSPSPYT. Asn-181 carries N-linked (GlcNAc...) asparagine glycosylation. Over residues 205-219 the composition is skewed to polar residues; that stretch reads NYEQPTTSKSHSPSP. A phosphoserine mark is found at Ser-216 and Ser-218. Residue Lys-247 forms a Glycyl lysine isopeptide (Lys-Gly) (interchain with G-Cter in SUMO2) linkage. Phosphoserine occurs at positions 264, 273, 324, 342, 345, 353, 423, 464, and 486.

It belongs to the SPATA6 family. Interacts with MYL6.

The protein localises to the secreted. The protein resides in the cell projection. Its subcellular location is the cilium. It is found in the flagellum. Its function is as follows. Required for formation of the sperm connecting piece during spermiogenesis. Sperm connecting piece is essential for linking the developing flagellum to the head during late spermiogenesis. May be involved in myosin-based microfilament transport through interaction with myosin subunits. This Bos taurus (Bovine) protein is Spermatogenesis-associated protein 6 (SPATA6).